The chain runs to 567 residues: MKQSKVFIPTMRDVPSEAEAQSHRLLLKSGLIKQSTSGIYSYLPLATRVLNNITAIVRQEMERIDSVEILMPALQQAELWEESGRWGAYGTELMRLQDRHGRQFALGPTHEELVTSIVRNELKSYKQLPMTLFQIQSKFRDEKRPRFGLLRGREFIMKDAYSFHADEASLDQTYQDMYQAYSRIFERVGINARPVVADSGAIGGSHTHEFMALSAIGEDTIVYSKESDYAANIEKAEVVYEPNHKHTTVQSLEKIETPNVKTAQELADFLGRPVDEIVKTMIFKVDGEYIMVLVRGHHEINDIKLKSYFGTDNIELATQDEIVNLVGANPGSLGPVIDKEIKIYADNFVQDLNNLVVGANEDGYHLINVNVGRDFNVDEYGDFRFILEGEKLSDSSGVAHFAEGIEVGQVFKLGTKYSESMNATFLDNQGKAQPLIMGCYGIGISRTLSAIVEQNHDDNGIVWPKSVTPFDLHLISINPKKDDQRELADALYAEFNTKFDVLYDDRQERAGVKFNDADLIGLPLRIVVGKRASEGIVEVKERLTGDSEEVHIADLMTVITNKYDNLK.

It belongs to the class-II aminoacyl-tRNA synthetase family. ProS type 1 subfamily. Homodimer.

It is found in the cytoplasm. It carries out the reaction tRNA(Pro) + L-proline + ATP = L-prolyl-tRNA(Pro) + AMP + diphosphate. Its function is as follows. Catalyzes the attachment of proline to tRNA(Pro) in a two-step reaction: proline is first activated by ATP to form Pro-AMP and then transferred to the acceptor end of tRNA(Pro). As ProRS can inadvertently accommodate and process non-cognate amino acids such as alanine and cysteine, to avoid such errors it has two additional distinct editing activities against alanine. One activity is designated as 'pretransfer' editing and involves the tRNA(Pro)-independent hydrolysis of activated Ala-AMP. The other activity is designated 'posttransfer' editing and involves deacylation of mischarged Ala-tRNA(Pro). The misacylated Cys-tRNA(Pro) is not edited by ProRS. The protein is Proline--tRNA ligase of Staphylococcus aureus (strain bovine RF122 / ET3-1).